The primary structure comprises 420 residues: Glycogen synthase kinase-3 beta (420 aa).

The span at 1–22 shows a compositional bias: polar residues; it reads MSGRPRTTSFAESCKPVQQPSA. The segment at 1-53 is disordered; the sequence is MSGRPRTTSFAESCKPVQQPSAFGSMKVSRDKDGSKVTTVVATPGQGPDRPQE. At serine 9 the chain carries Phosphoserine; by PKB/AKT1, RPS6KA3 and SGK3. Cysteine 14 carries S-palmitoyl cysteine lipidation. The region spanning 56 to 340 is the Protein kinase domain; the sequence is YTDTKVIGNG…PLEACAHSFF (285 aa). Residues 62–70 and lysine 85 each bind ATP; that span reads IGNGSFGVV. Catalysis depends on aspartate 181, which acts as the Proton acceptor. Tyrosine 216 is modified (phosphotyrosine). Low complexity predominate over residues 386 to 401; sequence AAASTPTNATAASDAN. A disordered region spans residues 386–420; the sequence is AAASTPTNATAASDANTGDRGQTNNAASASASNST. Serine 389 is modified (phosphoserine). 2 positions are modified to phosphothreonine: threonine 390 and threonine 402. Over residues 409–420 the composition is skewed to low complexity; it reads NNAASASASNST.

This sequence belongs to the protein kinase superfamily. CMGC Ser/Thr protein kinase family. GSK-3 subfamily. As to quaternary structure, monomer. Interacts with ARRB2, DISC1 and ZBED3. Interacts with CABYR, MMP2, MUC1, NIN and PRUNE1. Interacts with AXIN1; the interaction mediates hyperphosphorylation of CTNNB1 leading to its ubiquitination and destruction. Interacts with and phosphorylates SNAI1. Interacts with DNM1L (via a C-terminal domain). Found in a complex composed of MACF1, APC, AXIN1, CTNNB1 and GSK3B. Interacts with SGK3. Interacts with DAB2IP (via C2 domain); the interaction stimulates GSK3B kinase activation. Interacts (via C2 domain) with PPP2CA. Interacts with the CLOCK-BMAL1 heterodimer. Interacts with the BMAL1. Interacts with CTNND2. Interacts with NCYM. The complex composed, at least, of APC, CTNNB1 and GSK3B interacts with JPT1; the interaction requires the inactive form of GSK3B (phosphorylated at 'Ser-9'). Forms a complex composed of PRKAR2A or PRKAR2B, GSK3B and GSKIP through GSKIP interaction; facilitates PKA-induced phosphorylation and regulates GSK3B activity. Interacts with GSKIP. Interacts with GID8. Interacts with PIWIL2. Interacts with LMBR1L. Interacts with DDX3X. Interacts with BIRC2. Interacts with TNFRSF10B; TNFRSF10B stimulation inhibits GSK3B kinase activity. Interacts with RICTOR; the interaction results in phosphorylation of RICTOR at 'Thr-1695' by GSK3B which facilitates FBXW7-mediated ubiquitination and subsequent degradation of RICTOR. Found in a complex with SLC39A6, SLC39A10 and with GSK3B that controls NCAM1 phosphorylation. Interacts with PKP3 (via ARM repeats); the interaction may be involved in PKP3 protein degradation. In terms of processing, phosphorylated by AKT1 and ILK1. Upon insulin-mediated signaling, the activated PKB/AKT1 protein kinase phosphorylates and deactivates GSK3B, resulting in the dephosphorylation and activation of GYS1. Activated by phosphorylation at Tyr-216. Inactivated by phosphorylation at Ser-9. Phosphorylated in a circadian manner in the hippocampus. Post-translationally, mono-ADP-ribosylation by PARP10 negatively regulates kinase activity. Palmitoylated. Palmitoylation by ZDHHC4 prevents AKT1-mediated phosphorylation. Expressed in testis, thymus, prostate and ovary and weakly expressed in lung, brain and kidney. Colocalizes with EIF2AK2/PKR and TAU in the Alzheimer disease (AD) brain.

The protein localises to the cytoplasm. It is found in the nucleus. It localises to the cell membrane. It catalyses the reaction L-seryl-[tau protein] + ATP = O-phospho-L-seryl-[tau protein] + ADP + H(+). The enzyme catalyses L-threonyl-[tau protein] + ATP = O-phospho-L-threonyl-[tau protein] + ADP + H(+). It carries out the reaction L-seryl-[protein] + ATP = O-phospho-L-seryl-[protein] + ADP + H(+). The catalysed reaction is L-threonyl-[protein] + ATP = O-phospho-L-threonyl-[protein] + ADP + H(+). With respect to regulation, activated by phosphorylation at Tyr-216. In response to insulin, inhibited by phosphorylation at Ser-9 by PKB/AKT1 and RPS6KA3; phosphorylation at this site causes a conformational change, preventing access of substrates to the active site. Inhibited by IL22 treatment which also triggers phosphorylation at Ser-9, promoting inactivation. Inhibited by lithium. Its function is as follows. Constitutively active protein kinase that acts as a negative regulator in the hormonal control of glucose homeostasis, Wnt signaling and regulation of transcription factors and microtubules, by phosphorylating and inactivating glycogen synthase (GYS1 or GYS2), EIF2B, CTNNB1/beta-catenin, APC, AXIN1, DPYSL2/CRMP2, JUN, NFATC1/NFATC, MAPT/TAU and MACF1. Requires primed phosphorylation of the majority of its substrates. In skeletal muscle, contributes to insulin regulation of glycogen synthesis by phosphorylating and inhibiting GYS1 activity and hence glycogen synthesis. May also mediate the development of insulin resistance by regulating activation of transcription factors. Regulates protein synthesis by controlling the activity of initiation factor 2B (EIF2BE/EIF2B5) in the same manner as glycogen synthase. In Wnt signaling, GSK3B forms a multimeric complex with APC, AXIN1 and CTNNB1/beta-catenin and phosphorylates the N-terminus of CTNNB1 leading to its degradation mediated by ubiquitin/proteasomes. Phosphorylates JUN at sites proximal to its DNA-binding domain, thereby reducing its affinity for DNA. Phosphorylates NFATC1/NFATC on conserved serine residues promoting NFATC1/NFATC nuclear export, shutting off NFATC1/NFATC gene regulation, and thereby opposing the action of calcineurin. Phosphorylates MAPT/TAU on 'Thr-548', decreasing significantly MAPT/TAU ability to bind and stabilize microtubules. MAPT/TAU is the principal component of neurofibrillary tangles in Alzheimer disease. Plays an important role in ERBB2-dependent stabilization of microtubules at the cell cortex. Phosphorylates MACF1, inhibiting its binding to microtubules which is critical for its role in bulge stem cell migration and skin wound repair. Probably regulates NF-kappa-B (NFKB1) at the transcriptional level and is required for the NF-kappa-B-mediated anti-apoptotic response to TNF-alpha (TNF/TNFA). Negatively regulates replication in pancreatic beta-cells, resulting in apoptosis, loss of beta-cells and diabetes. Through phosphorylation of the anti-apoptotic protein MCL1, may control cell apoptosis in response to growth factors deprivation. Phosphorylates MUC1 in breast cancer cells, decreasing the interaction of MUC1 with CTNNB1/beta-catenin. Is necessary for the establishment of neuronal polarity and axon outgrowth. Phosphorylates MARK2, leading to inhibition of its activity. Phosphorylates SIK1 at 'Thr-182', leading to sustainment of its activity. Phosphorylates ZC3HAV1 which enhances its antiviral activity. Phosphorylates SNAI1, leading to its ubiquitination and proteasomal degradation. Phosphorylates SFPQ at 'Thr-687' upon T-cell activation. Phosphorylates NR1D1 st 'Ser-55' and 'Ser-59' and stabilizes it by protecting it from proteasomal degradation. Regulates the circadian clock via phosphorylation of the major clock components including BMAL1, CLOCK and PER2. Phosphorylates FBXL2 at 'Thr-404' and primes it for ubiquitination by the SCF(FBXO3) complex and proteasomal degradation. Phosphorylates CLOCK AT 'Ser-427' and targets it for proteasomal degradation. Phosphorylates BMAL1 at 'Ser-17' and 'Ser-21' and primes it for ubiquitination and proteasomal degradation. Phosphorylates OGT at 'Ser-3' or 'Ser-4' which positively regulates its activity. Phosphorylates MYCN in neuroblastoma cells which may promote its degradation. Regulates the circadian rhythmicity of hippocampal long-term potentiation and BMAL1 and PER2 expression. Acts as a regulator of autophagy by mediating phosphorylation of KAT5/TIP60 under starvation conditions, activating KAT5/TIP60 acetyltransferase activity and promoting acetylation of key autophagy regulators, such as ULK1 and RUBCNL/Pacer. Negatively regulates extrinsic apoptotic signaling pathway via death domain receptors. Promotes the formation of an anti-apoptotic complex, made of DDX3X, BRIC2 and GSK3B, at death receptors, including TNFRSF10B. The anti-apoptotic function is most effective with weak apoptotic signals and can be overcome by stronger stimulation. Phosphorylates E2F1, promoting the interaction between E2F1 and USP11, stabilizing E2F1 and promoting its activity. Phosphorylates mTORC2 complex component RICTOR at 'Ser-1235' in response to endoplasmic stress, inhibiting mTORC2. Phosphorylates mTORC2 complex component RICTOR at 'Thr-1695' which facilitates FBXW7-mediated ubiquitination and subsequent degradation of RICTOR. Phosphorylates FXR1, promoting FXR1 ubiquitination by the SCF(FBXO4) complex and FXR1 degradation by the proteasome. Phosphorylates interleukin-22 receptor subunit IL22RA1, preventing its proteasomal degradation. This is Glycogen synthase kinase-3 beta from Homo sapiens (Human).